The chain runs to 402 residues: Propionate kinase (402 aa).

The ATP site is built by Asn-11 and Lys-18. Mg(2+) is bound at residue Asn-11. Arg-86 lines the substrate pocket. Residue Asp-143 is the Proton donor/acceptor of the active site. ATP is bound by residues His-175, 203–207 (HLGNG), 278–280 (DLR), and 326–330 (GIGEN).

Belongs to the acetokinase family. TdcD subfamily. As to quaternary structure, homodimer. Requires Mg(2+) as cofactor.

It carries out the reaction propanoate + ATP = propanoyl phosphate + ADP. Its pathway is amino-acid degradation; L-threonine degradation via propanoate pathway; propanoate from L-threonine: step 4/4. In terms of biological role, catalyzes the conversion of propionyl phosphate and ADP to propionate and ATP. This chain is Propionate kinase, found in Escherichia coli O157:H7.